Reading from the N-terminus, the 1940-residue chain is MATDADMAIFGEAAPYLRKSEKERIEAQNKPFDAKSSVFVVHAKESYVKSTIQSKESGKVTVKTEGGETLTVKEDQIFSMNPPKYDKIEDMAMMTHLHEPAVLYNLKERYAAWMIYTYSGLFCVTVNPYKWLPVYNPEVVLAYRGKKRQEAPPHIFSISDNAYQFMLTDRENQSILITGESGAGKTVNTKRVIQYFATIAASGDKKKEEQPAGKMQGTLEDQIISANPLLEAFGNAKTVRNDNSSRFGKFIRIHFGATGKLASADIETYLLEKSRVTFQLKAERSYHIFYQIMSNKKPELIEMLLITTNPYDYQYVSQGEITVPSINDQEELMATDSAIDILGFTPDEKTAIYKLTGAVMHYGNLKFKQKQREEQAEPGGTEVADKAAYLMGLNSADLLKALCYPRVKVGNEYVTKGQTVQQVYNSVGALAKSVFEKMFLWMVVRINQQLDTKQPRQYFIGVLDIAGFEIFDFNSLEQLCINFTNEKLQQFFNHHMFVLEQEEYKKEGIEWEFIDFGMDLAACIELIEKPMGIFSILEEECMFPKATDTSFKNKLYDQHLGKSNNFQKPKPGKGKAEAHFSLVHYAGTVDYNITGWLEKNKDPLNETVVGLYQKSSLKTLALLFASVGGAEAESGAGGKKGGKKKGSSFQTVSALFRENLNKLMSNLRSTHPHFVRCLIPNETKTPGAMEHELVLHQLRCNGVLEGIRICRKGFPIRILYADFKQRYKVLNASAIPEGQFIDSKKASEKLLGSIDVDHTQYKFGHTKVFFKAGLLGLLEEMRDEKLAQLITRTQARCRGFLMRVEFKKMMERRESIFCIQYNVRAFMNVKHWPWMKLFFKIKPLLKSAESEKEMANMKEEFEKTKEELAKSEAKRKELEEKMVSLLQEKNDLQLQVQAEADGLADAEERCDQLIKTKIQLEAKIKELTERAEDEEEMNAELTAKKRKLEDECSELKKDIDDLELTLAKVEKEKHATENKVKNLTEEMAALDETIAKLTKEKKALQEAHQQTLDDLQAEEDKVNTLTKAKTKLEQQVDDLEGSLEQEKKLRMDLERAKRKLEGDLKMTQESTMDLENDKQQLDEKLKKKDFEISQIQSKIEDEQALGMQLQKKIKELQARIEELEEEIEAERTSRAKAEKHRADLSRELEEISERLEEAGGATAAQIDMNKKREAEFQKMRRDLEEATLQHEATAAALRKKHADSTADVGEQIDNLQRVKQKLEKEKSELKMEIDDLASNMESVSKAKANLEKMCRSLEDQLSEIKTKEEEQQRTINDISAQKARLQTESGEYSRQVEEKDALISQLSRGKQAFTQQIEELKRHLEEEIKAKKCPAHALQSARHDCDLLREQYEEEQEAKGELQRALSKANSEVAQWRTKYETDAIQRTEELEEAKKKLAQRLQDAEEHVEAVNSKCASLEKTKQRLQNEVEDLMIDVERSNAACAALDKKQKNFDKILSEWKQKYEETQAELEASQKESRSLSTELFKMKNAYEESLDHLETLKRENKNLQQEISDLTEQIAEGGKAIHELEKVKKQIEQEKSELQTALEEAEASLEHEEGKILRVQLELNQVKSDIDRKIAEKDEEIDQLKRNHLRVVDSMQSTLDAEIRSRNEALRLKKKMEGDLNEIEIQLSHANRQAAEAQKNLRNTQGVLKDTQIHLDDALRSQEDLKEQVAMVERRANLLQAEIEELRAALEQTERSRKVAEQELLDASERVQLLHTQNTSLINTKKKLESDISQIQSEMEDTIQEARNAEEKAKKAITDAAMMAEELKKEQDTSAHLERMKKNLDQTVKDLQHRLDEAEQLALKGGKKQIQKLEARVRELEGEVDAEQKRSAEAVKGVRKYERRVKELTYQSEEDRKNVLRLQDLVDKLQMKVKSYKRQAEEAEELSNVNLSKFRKIQHELEEAEERADIAESQVNKLRAKSREIGKKAESEE.

In terms of domain architecture, Myosin N-terminal SH3-like spans 33–82 (DAKSSVFVVHAKESYVKSTIQSKESGKVTVKTEGGETLTVKEDQIFSMNP). In terms of domain architecture, Myosin motor spans 86–783 (DKIEDMAMMT…LLGLLEEMRD (698 aa)). The residue at position 130 (Lys-130) is an N6,N6,N6-trimethyllysine. Position 179–186 (179–186 (GESGAGKT)) interacts with ATP. Actin-binding regions lie at residues 660-682 (LNKL…IPNE) and 762-776 (KFGH…GLLG). The 30-residue stretch at 786 to 815 (LAQLITRTQARCRGFLMRVEFKKMMERRES) folds into the IQ domain. Residues 844 to 1940 (LLKSAESEKE…EIGKKAESEE (1097 aa)) are a coiled coil. Residues 1912 to 1940 (EERADIAESQVNKLRAKSREIGKKAESEE) are disordered. The segment covering 1928 to 1940 (KSREIGKKAESEE) has biased composition (basic and acidic residues).

It belongs to the TRAFAC class myosin-kinesin ATPase superfamily. Myosin family. Muscle myosin is a hexameric protein that consists of 2 heavy chain subunits (MHC), 2 alkali light chain subunits (MLC) and 2 regulatory light chain subunits (MLC-2).

Its subcellular location is the cytoplasm. It localises to the myofibril. Muscle contraction. In Gallus gallus (Chicken), this protein is Myosin-1B (MYH1B).